A 540-amino-acid chain; its full sequence is 2-isopropylmalate synthase (540 aa).

The 262-residue stretch at 8-269 (VLIFDTTLRD…YFNPFFGRAE (262 aa)) folds into the Pyruvate carboxyltransferase domain. Mn(2+)-binding residues include D17, H208, H210, and N244. Residues 408 to 540 (QLKLVQVSCG…ATPLDASPTL (133 aa)) form a regulatory domain region.

The protein belongs to the alpha-IPM synthase/homocitrate synthase family. LeuA type 1 subfamily. As to quaternary structure, homodimer. It depends on Mn(2+) as a cofactor.

It is found in the cytoplasm. It catalyses the reaction 3-methyl-2-oxobutanoate + acetyl-CoA + H2O = (2S)-2-isopropylmalate + CoA + H(+). The protein operates within amino-acid biosynthesis; L-leucine biosynthesis; L-leucine from 3-methyl-2-oxobutanoate: step 1/4. Catalyzes the condensation of the acetyl group of acetyl-CoA with 3-methyl-2-oxobutanoate (2-ketoisovalerate) to form 3-carboxy-3-hydroxy-4-methylpentanoate (2-isopropylmalate). The polypeptide is 2-isopropylmalate synthase (Synechococcus sp. (strain WH7803)).